The chain runs to 254 residues: Fluoride-specific ion channel FluC 1 (254 aa).

A run of 3 helical transmembrane segments spans residues 19 to 39 (LDIL…TALY), 51 to 71 (IIGM…YGSV), and 80 to 100 (AFLI…VAVL). Residues G58 and S61 each coordinate Na(+).

This sequence belongs to the fluoride channel Fluc/FEX (TC 1.A.43) family.

The protein localises to the cell inner membrane. The enzyme catalyses fluoride(in) = fluoride(out). With respect to regulation, na(+) is not transported, but it plays an essential structural role and its presence is essential for fluoride channel function. Its function is as follows. Fluoride-specific ion channel. Important for reducing fluoride concentration in the cell, thus reducing its toxicity. This is Fluoride-specific ion channel FluC 1 from Brucella suis biovar 1 (strain 1330).